Here is a 682-residue protein sequence, read N- to C-terminus: Potassium-transporting ATPase ATP-binding subunit (682 aa).

4 consecutive transmembrane segments (helical) span residues 34–54, 62–82, 219–239, and 254–274; these read PVMFIVWIGSLLTTCISIAMA, ALFSAAISGWLWITVLFANFA, IALTILLIALTIVFLLATATL, and VLVALLVCLIPTTIGGLLSAI. Catalysis depends on Asp-307, which acts as the 4-aspartylphosphate intermediate. Residues Asp-344, Glu-348, 377 to 384, and Lys-395 contribute to the ATP site; that span reads FTAQSRMS. Residues Asp-518 and Asp-522 each contribute to the Mg(2+) site. A run of 3 helical transmembrane segments spans residues 588–608, 616–636, and 656–676; these read FAIIPAAFAATYPQLNALNIM, AILSAVIFNALIIVFLIPLAL, and IYGLGGLLVPFIGIKVIDLLL.

This sequence belongs to the cation transport ATPase (P-type) (TC 3.A.3) family. Type IA subfamily. As to quaternary structure, the system is composed of three essential subunits: KdpA, KdpB and KdpC.

Its subcellular location is the cell inner membrane. The enzyme catalyses K(+)(out) + ATP + H2O = K(+)(in) + ADP + phosphate + H(+). Its function is as follows. Part of the high-affinity ATP-driven potassium transport (or Kdp) system, which catalyzes the hydrolysis of ATP coupled with the electrogenic transport of potassium into the cytoplasm. This subunit is responsible for energy coupling to the transport system and for the release of the potassium ions to the cytoplasm. The polypeptide is Potassium-transporting ATPase ATP-binding subunit (Escherichia coli (strain ATCC 8739 / DSM 1576 / NBRC 3972 / NCIMB 8545 / WDCM 00012 / Crooks)).